The sequence spans 245 residues: tRNA (guanine-N(7)-)-methyltransferase (245 aa).

S-adenosyl-L-methionine contacts are provided by Glu-75, Glu-100, Asp-127, and Asp-149. Asp-149 is an active-site residue. Substrate contacts are provided by residues Lys-153, Asp-185, and 222–225; that span reads TKFE.

This sequence belongs to the class I-like SAM-binding methyltransferase superfamily. TrmB family.

The catalysed reaction is guanosine(46) in tRNA + S-adenosyl-L-methionine = N(7)-methylguanosine(46) in tRNA + S-adenosyl-L-homocysteine. It participates in tRNA modification; N(7)-methylguanine-tRNA biosynthesis. Functionally, catalyzes the formation of N(7)-methylguanine at position 46 (m7G46) in tRNA. The polypeptide is tRNA (guanine-N(7)-)-methyltransferase (Acinetobacter baylyi (strain ATCC 33305 / BD413 / ADP1)).